Here is a 278-residue protein sequence, read N- to C-terminus: HTH-type transcriptional activator RhaS (278 aa).

One can recognise an HTH araC/xylS-type domain in the interval 174–272 (NLLLAWLEDH…NWSPRDIRQG (99 aa)). 2 DNA-binding regions (H-T-H motif) span residues 191 to 212 (DAVAEQFSLSLRTLHRQLKQQT) and 239 to 262 (VTDIAYRCGFSDSNHFSTLFRREF).

Binds DNA as a dimer.

Its subcellular location is the cytoplasm. Activates expression of the rhaBAD and rhaT operons. In Escherichia coli O139:H28 (strain E24377A / ETEC), this protein is HTH-type transcriptional activator RhaS.